Consider the following 269-residue polypeptide: GTP cyclohydrolase FolE2 (269 aa).

Belongs to the GTP cyclohydrolase IV family.

The catalysed reaction is GTP + H2O = 7,8-dihydroneopterin 3'-triphosphate + formate + H(+). The protein operates within cofactor biosynthesis; 7,8-dihydroneopterin triphosphate biosynthesis; 7,8-dihydroneopterin triphosphate from GTP: step 1/1. Its function is as follows. Converts GTP to 7,8-dihydroneopterin triphosphate. The polypeptide is GTP cyclohydrolase FolE2 (Burkholderia mallei (strain NCTC 10229)).